The following is an 801-amino-acid chain: Phosphatidylinositol 4-phosphate 5-kinase 1 (801 aa).

The N-terminal stretch at 1–21 (MPGLHVVSFLVVLLLQLRSSG) is a signal peptide. MORN repeat units lie at residues 41 to 63 (YVGS…DGAL), 64 to 86 (YDGE…SGAS), 87 to 109 (YEGD…DGSV), 110 to 132 (YKGS…NSDT), 133 to 155 (YEGF…DGNV), 156 to 178 (YIGR…NGDT), 182 to 201 (NWLN…SGAC), and 202 to 223 (YIGT…PGSK). Residues 366–797 (GHRSYYLMLN…RFISFLEKVF (432 aa)) form the PIPK domain.

As to expression, expressed in young seedlings, shoot and seeds, and at lower level in roots, stem and leaf.

The enzyme catalyses a 1,2-diacyl-sn-glycero-3-phospho-(1D-myo-inositol 4-phosphate) + ATP = a 1,2-diacyl-sn-glycero-3-phospho-(1D-myo-inositol-4,5-bisphosphate) + ADP + H(+). Its function is as follows. Involved in flowering. May suppress floral initiation by modifying the expression of genes related to floral induction. The polypeptide is Phosphatidylinositol 4-phosphate 5-kinase 1 (PIPK1) (Oryza sativa subsp. japonica (Rice)).